A 403-amino-acid polypeptide reads, in one-letter code: MGKVWKQQMYPQYATYYYPQYLQAKQSLVPAHPMAPPSPSTTSSNNNSSSSSNSGWDQLSKTNLYIRGLPPNTTDQDLVKLCQPYGKIVSTKAILDKTTNKCKGYGFVDFDSPAAAQKAVSALKASGVQAQMAKQQEQDPTNLYISNLPLSMDEQELENMLKPFGQVISTRILRDSSGTSRGVGFARMESTEKCEAVIGHFNGKFIKTPPGVSAPTEPLLCKFADGGQKKRQNPNKYIPNGRPWHREGEAGMTLTYDPTTAAIQNGFYPSPYSIATNRMITQTSITPYIASPVSAYQVQSPSWMQPQPYILQHPGAVLTPSMEHTMSLQPASMISPLAQQMSHLSLGSTGTYMPATSAMQGAYLPQYTHVQTAAVPVEEASGQQQVTVETSNDHSPYTFQPNK.

Residues 30 to 56 are disordered; it reads PAHPMAPPSPSTTSSNNNSSSSSNSGW. Over residues 40–54 the composition is skewed to low complexity; sequence STTSSNNNSSSSSNS. RRM domains lie at 62 to 135 and 141 to 226; these read TNLY…MAKQ and TNLY…FADG. At Thr208 the chain carries Phosphothreonine.

It localises to the nucleus. Functionally, single-stranded DNA binding protein that interacts with the region upstream of the C-myc gene. Binds specifically to the DNA sequence motif 5'-[AT]CT[AT][AT]T-3'. Probably has a role in DNA replication. The protein is RNA-binding motif, single-stranded-interacting protein 1 (RBMS1) of Bos taurus (Bovine).